Reading from the N-terminus, the 105-residue chain is Probable tetrachloroethene reductive dehalogenase membrane anchor protein (105 aa).

3 consecutive transmembrane segments (helical) span residues isoleucine 3 to isoleucine 23, isoleucine 35 to glycine 55, and alanine 66 to tyrosine 86.

This sequence belongs to the PceB family.

The protein localises to the cell membrane. In terms of biological role, may act as a membrane anchor for the tetrachloroethene reductive dehalogenase PceA. This is Probable tetrachloroethene reductive dehalogenase membrane anchor protein from Desulfitobacterium hafniense (Desulfitobacterium frappieri).